Consider the following 241-residue polypeptide: tRNA pseudouridine synthase A (241 aa).

Residue Asp-52 is the Nucleophile of the active site. Tyr-111 lines the substrate pocket.

It belongs to the tRNA pseudouridine synthase TruA family. As to quaternary structure, homodimer.

The catalysed reaction is uridine(38/39/40) in tRNA = pseudouridine(38/39/40) in tRNA. In terms of biological role, formation of pseudouridine at positions 38, 39 and 40 in the anticodon stem and loop of transfer RNAs. The protein is tRNA pseudouridine synthase A of Ureaplasma urealyticum serovar 10 (strain ATCC 33699 / Western).